A 319-amino-acid polypeptide reads, in one-letter code: Phosphate acyltransferase (319 aa).

Belongs to the PlsX family. Homodimer. Probably interacts with PlsY.

It localises to the cytoplasm. It carries out the reaction a fatty acyl-[ACP] + phosphate = an acyl phosphate + holo-[ACP]. It participates in lipid metabolism; phospholipid metabolism. In terms of biological role, catalyzes the reversible formation of acyl-phosphate (acyl-PO(4)) from acyl-[acyl-carrier-protein] (acyl-ACP). This enzyme utilizes acyl-ACP as fatty acyl donor, but not acyl-CoA. This chain is Phosphate acyltransferase, found in Chlamydia muridarum (strain MoPn / Nigg).